We begin with the raw amino-acid sequence, 505 residues long: Lysine--tRNA ligase (505 aa).

2 residues coordinate Mg(2+): E415 and E422.

It belongs to the class-II aminoacyl-tRNA synthetase family. As to quaternary structure, homodimer. Mg(2+) serves as cofactor.

It localises to the cytoplasm. It carries out the reaction tRNA(Lys) + L-lysine + ATP = L-lysyl-tRNA(Lys) + AMP + diphosphate. The protein is Lysine--tRNA ligase of Vibrio parahaemolyticus serotype O3:K6 (strain RIMD 2210633).